The sequence spans 265 residues: Putative 2-aminoethylphosphonate transport system permease protein PhnV (265 aa).

Helical transmembrane passes span 13–33 (GVVA…VILM), 69–89 (LTIG…AALA), 104–124 (VFYL…LVAF), 131–151 (MNGT…AFTF), 185–205 (LPLL…LSMG), and 233–253 (NIAD…LLMM). Residues 65–253 (LLASLTIGFC…LVAITLLLMM (189 aa)) form the ABC transmembrane type-1 domain.

Belongs to the binding-protein-dependent transport system permease family.

Its subcellular location is the cell inner membrane. Probably part of the PhnSTUV complex (TC 3.A.1.11.5) involved in 2-aminoethylphosphonate import. Probably responsible for the translocation of the substrate across the membrane. The protein is Putative 2-aminoethylphosphonate transport system permease protein PhnV (phnV) of Salmonella choleraesuis (strain SC-B67).